The sequence spans 61 residues: Metallothionein-1 (61 aa).

Met-1 bears the N-acetylmethionine mark. Positions 1–29 (MDPNCSCSTGSTCTCSSSCGCKDCKCTSC) are beta. Positions 5, 7, 13, 15, 19, 21, 24, 26, 29, 33, 34, 36, 37, 41, 44, 48, 50, 57, 59, and 60 each coordinate a divalent metal cation. Positions 30 to 61 (KKSCCSCCPVGCSKCAQGCVCKGASDKCTCCA) are alpha.

It belongs to the metallothionein superfamily. Type 1 family.

Metallothioneins have a high content of cysteine residues that bind various heavy metals; these proteins are transcriptionally regulated by both heavy metals and glucocorticoids. The sequence is that of Metallothionein-1 (MT1) from Cricetulus griseus (Chinese hamster).